The sequence spans 377 residues: Transmembrane protein 237A (377 aa).

3 stretches are compositionally biased toward basic and acidic residues: residues 1 to 11, 43 to 64, and 74 to 87; these read MCVTSRADKMP, LESRRQSESREPLTPEPHDNPP, and HTFENEGEQQDHPN. A disordered region spans residues 1-124; that stretch reads MCVTSRADKM…NQSHNELGVE (124 aa). 4 helical membrane-spanning segments follow: residues 198 to 218, 239 to 259, 273 to 293, and 326 to 346; these read IIGLFSHGFLAGYAVWNIIVV, LAYPAQSLLYLLLAISTVSAF, GFLTLDPAALASFLYFAALIL, and PWIVVNLVVALLVGLAWVFVA.

It belongs to the TMEM237 family.

Its subcellular location is the membrane. It is found in the cell projection. It localises to the cilium. In terms of biological role, component of the transition zone in primary cilia. Required for ciliogenesis. This Danio rerio (Zebrafish) protein is Transmembrane protein 237A (tmem237a).